The sequence spans 864 residues: Sine oculis-binding protein homolog (864 aa).

Residues M1–K14 are compositionally biased toward basic and acidic residues. The segment at M1–R25 is disordered. 2 consecutive FCS-type zinc fingers follow at residues D142–A180 and F216–N256. Disordered stretches follow at residues L304–S360, R413–P484, and K550–G616. 2 stretches are compositionally biased toward low complexity: residues P314–S335 and H417–G433. A compositionally biased stretch (pro residues) spans I460–P484. Composition is skewed to low complexity over residues S565–L582 and G590–G603. An SUMO interaction motif 1 (SIM); mediates the binding to polysumoylated substrates motif is present at residues V618–T622. The residue at position 627 (S627) is a Phosphoserine. Positions V648–T652 match the SUMO interaction motif 2 (SIM); mediates the binding to polysumoylated substrates motif. Residue K672 forms a Glycyl lysine isopeptide (Lys-Gly) (interchain with G-Cter in SUMO2) linkage. Residue S694 is modified to Phosphoserine. The segment at A725 to S750 is disordered. Residues E733–P745 are compositionally biased toward pro residues.

The protein belongs to the SOBP family. Interacts (via SIM domains) with SUMO1 and SUMO2.

Functionally, implicated in development of the cochlea. The protein is Sine oculis-binding protein homolog of Rattus norvegicus (Rat).